We begin with the raw amino-acid sequence, 154 residues long: Probable ubiquitin-conjugating enzyme E2 31 (154 aa).

The 146-residue stretch at 8–153 folds into the UBC core domain; that stretch reads KAAQRIAMEY…AREFTARHAN (146 aa). C91 functions as the Glycyl thioester intermediate in the catalytic mechanism.

Belongs to the ubiquitin-conjugating enzyme family.

It carries out the reaction S-ubiquitinyl-[E1 ubiquitin-activating enzyme]-L-cysteine + [E2 ubiquitin-conjugating enzyme]-L-cysteine = [E1 ubiquitin-activating enzyme]-L-cysteine + S-ubiquitinyl-[E2 ubiquitin-conjugating enzyme]-L-cysteine.. Its pathway is protein modification; protein ubiquitination. Accepts the ubiquitin from the E1 complex and catalyzes its covalent attachment to other proteins. In Arabidopsis thaliana (Mouse-ear cress), this protein is Probable ubiquitin-conjugating enzyme E2 31 (UBC31).